Reading from the N-terminus, the 470-residue chain is Chitin deacetylase 1 (470 aa).

The first 19 residues, 1–19 (MFTFAAFSALLISLAGVVA), serve as a signal peptide directing secretion. 2 N-linked (GlcNAc...) asparagine glycosylation sites follow: N101 and N121. C155 and C363 are disulfide-bonded. Residues 159–358 (NVWGLSYDDG…VLANGTYQLK (200 aa)) form the NodB homology domain. D166 (proton acceptor) is an active-site residue. D166 serves as a coordination point for acetate. 3 residues coordinate Co(2+): D167, H216, and H220. Residue Y257 coordinates acetate. The active-site Proton donor is H331. N-linked (GlcNAc...) asparagine glycosylation is found at N352, N378, and N440. Residues 406–447 (EVSAPSEATGSTAAGSAASTTSGSGASASTGAASNTSSSGSG) are disordered. Positions 408–447 (SAPSEATGSTAAGSAASTTSGSGASASTGAASNTSSSGSG) are enriched in low complexity. The GPI-anchor amidated serine moiety is linked to residue S444. Residues 445–470 (GSGRSATMGGALIALAAVAVGMVYVA) constitute a propeptide, removed in mature form.

This sequence belongs to the polysaccharide deacetylase family. It depends on Co(2+) as a cofactor.

The protein resides in the secreted. It is found in the cell wall. The protein localises to the cell membrane. It catalyses the reaction [(1-&gt;4)-N-acetyl-beta-D-glucosaminyl](n) + n H2O = chitosan + n acetate. Functionally, hydrolyzes the N-acetamido groups of N-acetyl-D-glucosamine residues in chitin to form chitosan and acetate. Chitosan is required to anchor melanin to the cell wall, for maintenance of cell wall integrity, and for proper cytokinesis. Plays a major role in synthesizing cell wall chitosan during host infection; chitosan offers an advantage during infection as it is less readily detected than chitin by host immunosurveillance mechanisms. The sequence is that of Chitin deacetylase 1 from Cryptococcus neoformans var. grubii serotype A (strain H99 / ATCC 208821 / CBS 10515 / FGSC 9487) (Filobasidiella neoformans var. grubii).